Here is a 441-residue protein sequence, read N- to C-terminus: ATP-dependent protease ATPase subunit HslU (441 aa).

Residues Ile18, 60–65, Asp254, Glu319, and Arg391 each bind ATP; that span reads GVGKTE.

Belongs to the ClpX chaperone family. HslU subfamily. As to quaternary structure, a double ring-shaped homohexamer of HslV is capped on each side by a ring-shaped HslU homohexamer. The assembly of the HslU/HslV complex is dependent on binding of ATP.

Its subcellular location is the cytoplasm. ATPase subunit of a proteasome-like degradation complex; this subunit has chaperone activity. The binding of ATP and its subsequent hydrolysis by HslU are essential for unfolding of protein substrates subsequently hydrolyzed by HslV. HslU recognizes the N-terminal part of its protein substrates and unfolds these before they are guided to HslV for hydrolysis. The chain is ATP-dependent protease ATPase subunit HslU from Shewanella sediminis (strain HAW-EB3).